The primary structure comprises 479 residues: Protein kinase 2 (479 aa).

Positions 1 to 136 (MGKGQSKIKN…NGNDDEDEGP (136 aa)) are disordered. Composition is skewed to low complexity over residues 52–65 (AQQQ…TTAA) and 79–96 (IPAP…TPTI). The segment covering 102–115 (NTDNNNINGASNEA) has biased composition (polar residues). A Protein kinase domain is found at 153–407 (FELLNVIGKG…GGEVKQHPWF (255 aa)). ATP-binding positions include 159 to 167 (IGKGSFGKV) and K182. D276 functions as the Proton acceptor in the catalytic mechanism. T309 is modified (phosphothreonine; by autocatalysis). Residues 408–479 (KNIDWEKLDR…TYVADSILKD (72 aa)) form the AGC-kinase C-terminal domain. The residue at position 470 (T470) is a Phosphothreonine.

It belongs to the protein kinase superfamily. AGC Ser/Thr protein kinase family. S6 kinase subfamily. Seems to be myristoylated.

The protein localises to the cytoplasm. It is found in the cell membrane. It carries out the reaction L-seryl-[protein] + ATP = O-phospho-L-seryl-[protein] + ADP + H(+). It catalyses the reaction L-threonyl-[protein] + ATP = O-phospho-L-threonyl-[protein] + ADP + H(+). Required for morphogenesis during multicellular development. Phosphorylates talB, gefN, gefS, PI4P 5-kinase and gacQ. This chain is Protein kinase 2 (pkgB), found in Dictyostelium discoideum (Social amoeba).